Reading from the N-terminus, the 927-residue chain is SPX and EXS domain-containing protein 5 (927 aa).

In terms of domain architecture, SPX spans 1–460 (MKFGKYLESQ…GLSIGSQVMS (460 aa)). Disordered regions lie at residues 54-78 (KINS…SSSN), 204-239 (KKNK…QHLQ), 257-305 (PIKS…DQDP), and 326-355 (SDNC…GGNN). Composition is skewed to low complexity over residues 60–78 (PSPT…SSSN) and 208–224 (LNNN…NNNN). Positions 257–270 (PIKSTPLSPKQQDG) are enriched in polar residues. Residues 286-299 (LEEEEEEEEEEDDN) are compositionally biased toward acidic residues. 8 consecutive transmembrane segments (helical) span residues 516-536 (FFSG…YYFI), 553-573 (VYSA…DCWV), 597-617 (IFQA…VYMW), 636-656 (PLVL…IFQL), 682-702 (FFMG…AQFV), 769-789 (LSIV…DSGW), 845-862 (FVYY…TTWT), and 869-889 (QLTN…IEIL). The EXS domain maps to 717 to 927 (GCIRYARYFN…LPYQIRDNEN (211 aa)).

Belongs to the SYG1 (TC 2.A.94) family.

The protein resides in the membrane. This chain is SPX and EXS domain-containing protein 5, found in Dictyostelium discoideum (Social amoeba).